We begin with the raw amino-acid sequence, 291 residues long: Insulin-like growth factor-binding protein 3 (291 aa).

The N-terminal stretch at 1–27 (MLRARPALWAAALTALTLLRGPPAARA) is a signal peptide. Positions 28–134 (GAGTMGAGPV…LRPYLLPSAS (107 aa)) are IGF-binding. The region spanning 36 to 119 (PVVRCEPCDA…LDGRGLCANA (84 aa)) is the IGFBP N-terminal domain. 6 cysteine pairs are disulfide-bonded: C40–C69, C43–C71, C51–C72, C60–C75, C83–C96, and C90–C116. Residues N118 and N136 are each glycosylated (N-linked (GlcNAc...) asparagine). Disordered regions lie at residues 132–162 (SASG…RVPV) and 177–211 (KGHA…TEYG). Residues 146-155 (MGSTENQAGP) show a composition bias toward polar residues. S148 is modified (phosphoserine). Positions 177-190 (KGHAKDSQRYKVDY) are enriched in basic and acidic residues. Polar residues predominate over residues 191-202 (ESQSTDTQNFSS). N-linked (GlcNAc...) asparagine glycosylation occurs at N199. Residue S201 is modified to Phosphoserine. The region spanning 210–285 (YGPCRREMED…DVKGKGDVHC (76 aa)) is the Thyroglobulin type-1 domain. 3 disulfide bridges follow: C213-C240, C251-C262, and C264-C285.

In terms of assembly, interacts with XLKD1. Binds IGF2 more than IGF1. Forms a ternary complex of about 140 to 150 kDa with IGF1 or IGF2 and a 85 kDa glycoprotein (ALS). Interacts with humanin; humanin competes with importin KPNB1 for binding to IGFBP3, blocking IGFBP3 nuclear import and IGFBP3-mediated apoptosis. Interacts with TMEM219. Interacts with RXRA; this interaction modulates the transcriptional activity of RXRA. Interacts with LRP1; this interaction mediates cell growth inhibition independent of IGF1. In terms of processing, phosphorylated by FAM20C in the extracellular medium. Phosphorylated by CK2; resulting in decreased nuclear localization. As to expression, plasma; expressed by most tissues.

The protein resides in the secreted. It localises to the nucleus. In terms of biological role, multifunctional protein that plays a critical role in regulating the availability of IGFs such as IGF1 and IGF2 to their receptors and thereby regulates IGF-mediated cellular processes including proliferation, differentiation, and apoptosis in a cell-type specific manner. Also exhibits IGF-independent antiproliferative and apoptotic effects mediated by its receptor TMEM219/IGFBP-3R. Inhibits the positive effect of humanin on insulin sensitivity. Promotes testicular germ cell apoptosis. Acts via LRP-1/alpha2M receptor, also known as TGF-beta type V receptor, to mediate cell growth inhibition independent of IGF1. Mechanistically, induces serine-specific dephosphorylation of IRS1 or IRS2 upon ligation to its receptor, leading to the inhibitory cascade. In the nucleus, interacts with transcription factors such as retinoid X receptor-alpha/RXRA to regulate transcriptional signaling and apoptosis. The protein is Insulin-like growth factor-binding protein 3 (IGFBP3) of Bos taurus (Bovine).